The sequence spans 134 residues: Viral interleukin-8 homolog (134 aa).

Positions Met1–Gly22 are cleaved as a signal peptide.

It belongs to the intercrine alpha (chemokine CxC) family. Homodimer.

It is found in the secreted. Plays a role in the early phase of cytolytic infections presumably by recruiting host B or T-lymphocytes. This Gallus gallus (Chicken) protein is Viral interleukin-8 homolog (MDV078).